A 194-amino-acid chain; its full sequence is Large ribosomal subunit protein uL22 (194 aa).

Belongs to the universal ribosomal protein uL22 family.

In Aspergillus fumigatus (strain ATCC MYA-4609 / CBS 101355 / FGSC A1100 / Af293) (Neosartorya fumigata), this protein is Large ribosomal subunit protein uL22 (rpl17).